A 331-amino-acid polypeptide reads, in one-letter code: High-affinity nickel-transport protein NixA (331 aa).

Residues 1-5 (MKLWF) lie on the Cytoplasmic side of the membrane. The helical transmembrane segment at 6–26 (PYFLAIVFLHALGLALLFMAN) threads the bilayer. Residues 27–33 (NASFYAA) lie on the Periplasmic side of the membrane. A helical membrane pass occupies residues 34–54 (ASMAYMLGAKHAFDADHIACI). Residues 55 to 66 (DNTIRKLTQQGK) are Cytoplasmic-facing. Residues 67–87 (NAYGVGFYFSMGHSSVVILMT) form a helical membrane-spanning segment. Residues 88-113 (IISAFAIAWAKEHTPMLEEIGGVVGT) are Periplasmic-facing. Residues 114 to 135 (LVSGLFLLIIGLLNAIILLDLL) traverse the membrane as a helical segment. At 136–178 (KIFKKSHSNESLSQQQNEEIERLLTSRGLLNRFFKPLFNFVSK) the chain is on the cytoplasmic side. The helical transmembrane segment at 179–199 (SWHIYPIGFLFGLGFDTASEI) threads the bilayer. Residues 200–225 (ALLALSSSAIKVSMVGMLSLPILFAA) lie on the Periplasmic side of the membrane. Residues 226 to 246 (GMSLFDTLDGAFMLKAYDWAF) traverse the membrane as a helical segment. Residues 247–252 (KTPLRK) lie on the Cytoplasmic side of the membrane. Residues 253 to 273 (IYYNISITALSVFIALFIGLI) form a helical membrane-spanning segment. At 274 to 302 (ELFQVVSEKLHLKFENRLLRALQSLEFTD) the chain is on the periplasmic side. A helical transmembrane segment spans residues 303-322 (LGYYLVGLFVIAFLGSFFLW). The Cytoplasmic portion of the chain corresponds to 323–331 (KIKFSKLES).

It belongs to the NiCoT transporter (TC 2.A.52) family.

It is found in the cell inner membrane. High-affinity nickel intake protein. Imports nickel ions in an energy-dependent fashion. Necessary for the expression of catalytically active urease. The protein is High-affinity nickel-transport protein NixA (nixA) of Helicobacter pylori (strain ATCC 700392 / 26695) (Campylobacter pylori).